We begin with the raw amino-acid sequence, 481 residues long: Cytochrome P450 monooygenase 2 (481 aa).

The helical transmembrane segment at 12-32 (GSQLLPFYIAIFVFTLVPWAI) threads the bilayer. Residue C418 participates in heme binding.

This sequence belongs to the cytochrome P450 family. It depends on heme as a cofactor.

The protein localises to the membrane. It participates in plant hormone biosynthesis; gibberellin biosynthesis. Its function is as follows. Gibberellin 20-oxidase; part of the gene cluster that mediates the biosynthesis of gibberellins (GAs), diterpenoids that may provide a selective advantage during infection of the preferred host plant, rice. Gibberellins (GAs) are diterpenoids and are synthesized via the mevalonate pathway. Biosynthesis of the major metabolite GA3 (gibberellic acid) from geranylgeranyl diphosphate (GGPP) requires 13 steps. The GGPP produced by the geranylgeranyl diphosphate synthase GGS2 is converted to ent-kaurene via ent-copalyldiphosphate in a two-step cyclization reaction performed by the bifunctional ent-copalyl diphosphate synthase/ent-kaurene synthase enzyme (CPS/KS). Ent-Kaurene is metabolized to GAs by a series of oxidation reactions catalyzed by cytochrome P450 monooxygenases. Cytochrome P450 monooxygenase P450-4 is an ent-kaurene oxidase that catalyzes the three oxidation steps between ent-kaurene and ent-kaurenoic acid. The highly multifunctional cytochrome P450 monooxygenase P450-1 then catalyzes four steps involving oxidation at two carbon atoms, in the main pathway from ent-kaurenoic acid to GA14 via GA12-aldehyde as well as producing kaurenolides and fujenoic acids as by-products. The cytochrome P450 monooxygenase P450-2 then converts GA14 to GA4 by removal of C-20. GA4 is further converted to GA7 by the GA4 desaturase DES via 1,2-desaturation before cytochrome P450 monooxygenase P450-3, a 13-hydroxylase, hydroxylates GA7 to GA3, the final product of the GA-biosynthetic pathway. The protein is Cytochrome P450 monooygenase 2 of Gibberella fujikuroi (strain CBS 195.34 / IMI 58289 / NRRL A-6831) (Bakanae and foot rot disease fungus).